A 212-amino-acid polypeptide reads, in one-letter code: Cytidylate kinase (212 aa).

7 to 15 is a binding site for ATP; it reads GPAASGKGT.

This sequence belongs to the cytidylate kinase family. Type 1 subfamily.

It localises to the cytoplasm. The enzyme catalyses CMP + ATP = CDP + ADP. It carries out the reaction dCMP + ATP = dCDP + ADP. The polypeptide is Cytidylate kinase (Bradyrhizobium diazoefficiens (strain JCM 10833 / BCRC 13528 / IAM 13628 / NBRC 14792 / USDA 110)).